A 285-amino-acid chain; its full sequence is ATP phosphoribosyltransferase (285 aa).

This sequence belongs to the ATP phosphoribosyltransferase family. Long subfamily. Mg(2+) serves as cofactor.

It localises to the cytoplasm. It catalyses the reaction 1-(5-phospho-beta-D-ribosyl)-ATP + diphosphate = 5-phospho-alpha-D-ribose 1-diphosphate + ATP. The protein operates within amino-acid biosynthesis; L-histidine biosynthesis; L-histidine from 5-phospho-alpha-D-ribose 1-diphosphate: step 1/9. Its activity is regulated as follows. Feedback inhibited by histidine. Catalyzes the condensation of ATP and 5-phosphoribose 1-diphosphate to form N'-(5'-phosphoribosyl)-ATP (PR-ATP). Has a crucial role in the pathway because the rate of histidine biosynthesis seems to be controlled primarily by regulation of HisG enzymatic activity. The sequence is that of ATP phosphoribosyltransferase from Sulfolobus acidocaldarius (strain ATCC 33909 / DSM 639 / JCM 8929 / NBRC 15157 / NCIMB 11770).